The chain runs to 197 residues: NADH-quinone oxidoreductase subunit B (197 aa).

Positions 76, 77, 141, and 171 each coordinate [4Fe-4S] cluster.

The protein belongs to the complex I 20 kDa subunit family. NDH-1 is composed of 14 different subunits. Subunits NuoB, C, D, E, F, and G constitute the peripheral sector of the complex. Requires [4Fe-4S] cluster as cofactor.

It localises to the cell inner membrane. It carries out the reaction a quinone + NADH + 5 H(+)(in) = a quinol + NAD(+) + 4 H(+)(out). In terms of biological role, NDH-1 shuttles electrons from NADH, via FMN and iron-sulfur (Fe-S) centers, to quinones in the respiratory chain. The immediate electron acceptor for the enzyme in this species is believed to be ubiquinone. Couples the redox reaction to proton translocation (for every two electrons transferred, four hydrogen ions are translocated across the cytoplasmic membrane), and thus conserves the redox energy in a proton gradient. This chain is NADH-quinone oxidoreductase subunit B, found in Methylobacterium nodulans (strain LMG 21967 / CNCM I-2342 / ORS 2060).